A 167-amino-acid polypeptide reads, in one-letter code: Mannose-specific lectin (167 aa).

Positions 1–24 are cleaved as a signal peptide; it reads MAFSISSTMIFLLSLALFSTLVSA. The Bulb-type lectin domain occupies 25 to 138; the sequence is DNHLLPGERL…PIFATGTNRF (114 aa). A disulfide bridge connects residues Cys-53 and Cys-76.

Homotetramer. As to expression, expressed in the pseudobulb, with highest levels of expression in the non-swollen internode (at protein level).

It is found in the secreted. In terms of biological role, mannose-specific lectin. Shows agglutinating activity towards chicken erythrocytes. Has antifungal activity against A.alternata and Collectotrichum species. This Dendrobium findlayanum (Findlay's orchid) protein is Mannose-specific lectin.